Here is a 349-residue protein sequence, read N- to C-terminus: Core protein VP7 (349 aa).

N-linked (GlcNAc...) asparagine; by host glycosylation is found at N193 and N287.

This sequence belongs to the orbivirus VP7 family. In terms of assembly, homotrimer that assemble in a complex of 260 capsomers on an inner scaffold composed of VP3.

The protein resides in the virion. In terms of biological role, the VP7 protein is one of the five proteins (with VP1, VP3, VP4, and VP6) which form the inner capsid of the virus. This Antilocapra americana (Pronghorn) protein is Core protein VP7 (Segment-7).